Here is a 258-residue protein sequence, read N- to C-terminus: ATP synthase subunit a (258 aa).

Transmembrane regions (helical) follow at residues 30–50 (SSYF…VAMS), 85–105 (FFPF…LGMF), 122–142 (LIVT…YGVF), 151–171 (LFVP…IEII), 198–218 (FAGF…LAGI), and 230–250 (LEFL…CIYL).

The protein belongs to the ATPase A chain family. As to quaternary structure, F-type ATPases have 2 components, CF(1) - the catalytic core - and CF(0) - the membrane proton channel. CF(1) has five subunits: alpha(3), beta(3), gamma(1), delta(1), epsilon(1). CF(0) has three main subunits: a(1), b(2) and c(9-12). The alpha and beta chains form an alternating ring which encloses part of the gamma chain. CF(1) is attached to CF(0) by a central stalk formed by the gamma and epsilon chains, while a peripheral stalk is formed by the delta and b chains.

It localises to the cell inner membrane. Its function is as follows. Key component of the proton channel; it plays a direct role in the translocation of protons across the membrane. The protein is ATP synthase subunit a of Maricaulis maris (strain MCS10) (Caulobacter maris).